The primary structure comprises 186 residues: Photosystem I assembly protein Ycf4 (186 aa).

The next 2 helical transmembrane spans lie at 26–46 (WATI…SSYF) and 66–86 (IVMT…WLTI).

Belongs to the Ycf4 family.

It localises to the plastid. It is found in the chloroplast thylakoid membrane. Functionally, seems to be required for the assembly of the photosystem I complex. In Pyropia yezoensis (Susabi-nori), this protein is Photosystem I assembly protein Ycf4.